We begin with the raw amino-acid sequence, 347 residues long: tRNA pseudouridine synthase D (347 aa).

Residue D81 is the Nucleophile of the active site. The region spanning 158–305 (GVPNYFGSQR…RHDRRDIALK (148 aa)) is the TRUD domain.

Belongs to the pseudouridine synthase TruD family.

It carries out the reaction uridine(13) in tRNA = pseudouridine(13) in tRNA. In terms of biological role, responsible for synthesis of pseudouridine from uracil-13 in transfer RNAs. The protein is tRNA pseudouridine synthase D of Vibrio campbellii (strain ATCC BAA-1116).